Reading from the N-terminus, the 284-residue chain is Pantothenate synthetase (284 aa).

30-37 provides a ligand contact to ATP; the sequence is MGNLHDGH. Histidine 37 acts as the Proton donor in catalysis. Glutamine 61 contacts (R)-pantoate. Glutamine 61 contacts beta-alanine. 149–152 lines the ATP pocket; it reads GEKD. Glutamine 155 contacts (R)-pantoate. Residues valine 178 and 186-189 contribute to the ATP site; that span reads LSSR.

Belongs to the pantothenate synthetase family. Homodimer.

The protein localises to the cytoplasm. The enzyme catalyses (R)-pantoate + beta-alanine + ATP = (R)-pantothenate + AMP + diphosphate + H(+). The protein operates within cofactor biosynthesis; (R)-pantothenate biosynthesis; (R)-pantothenate from (R)-pantoate and beta-alanine: step 1/1. Catalyzes the condensation of pantoate with beta-alanine in an ATP-dependent reaction via a pantoyl-adenylate intermediate. This chain is Pantothenate synthetase, found in Klebsiella pneumoniae (strain 342).